A 156-amino-acid polypeptide reads, in one-letter code: Arginine repressor (156 aa).

This sequence belongs to the ArgR family.

It is found in the cytoplasm. It functions in the pathway amino-acid biosynthesis; L-arginine biosynthesis [regulation]. Functionally, regulates arginine biosynthesis genes. The polypeptide is Arginine repressor (Pectobacterium atrosepticum (strain SCRI 1043 / ATCC BAA-672) (Erwinia carotovora subsp. atroseptica)).